Here is a 78-residue protein sequence, read N- to C-terminus: Ferritin light chain (78 aa).

The Ferritin-like diiron domain occupies 1–59 (EAALHLEKGLNQALVDLHALGSARADPHLCDFLENHFLDEEVKLIKKMGDHLTNLRRLS).

The protein belongs to the ferritin family. As to quaternary structure, oligomer of 24 subunits. There are two types of subunits: L (light) chain and H (heavy) chain. The major chain can be light or heavy, depending on the species and tissue type. The functional molecule forms a roughly spherical shell with a diameter of 12 nm and contains a central cavity into which the insoluble mineral iron core is deposited. Interacts with NCOA4.

It is found in the cytoplasmic vesicle. The protein localises to the autophagosome. The protein resides in the cytoplasm. It localises to the autolysosome. Its function is as follows. Stores iron in a soluble, non-toxic, readily available form. Important for iron homeostasis. Iron is taken up in the ferrous form and deposited as ferric hydroxides after oxidation. Also plays a role in delivery of iron to cells. Mediates iron uptake in capsule cells of the developing kidney. Delivery to lysosomes by the cargo receptor NCOA4 for autophagic degradation and release or iron. The protein is Ferritin light chain (FTL) of Sus scrofa (Pig).